The following is a 442-amino-acid chain: tRNA-2-methylthio-N(6)-dimethylallyladenosine synthase (442 aa).

One can recognise an MTTase N-terminal domain in the interval 3-120; it reads KKLYIETHGC…LPEMIDAARI (118 aa). Cysteine 12, cysteine 49, cysteine 83, cysteine 157, cysteine 161, and cysteine 164 together coordinate [4Fe-4S] cluster. The 233-residue stretch at 143 to 375 folds into the Radical SAM core domain; sequence RVDGPSAYVS…QHRLNQQGFE (233 aa). Positions 378-442 constitute a TRAM domain; the sequence is RQMVGSIQRI…PHSLRGSLLQ (65 aa).

This sequence belongs to the methylthiotransferase family. MiaB subfamily. In terms of assembly, monomer. The cofactor is [4Fe-4S] cluster.

The protein resides in the cytoplasm. The enzyme catalyses N(6)-dimethylallyladenosine(37) in tRNA + (sulfur carrier)-SH + AH2 + 2 S-adenosyl-L-methionine = 2-methylsulfanyl-N(6)-dimethylallyladenosine(37) in tRNA + (sulfur carrier)-H + 5'-deoxyadenosine + L-methionine + A + S-adenosyl-L-homocysteine + 2 H(+). Catalyzes the methylthiolation of N6-(dimethylallyl)adenosine (i(6)A), leading to the formation of 2-methylthio-N6-(dimethylallyl)adenosine (ms(2)i(6)A) at position 37 in tRNAs that read codons beginning with uridine. In Pseudomonas savastanoi pv. phaseolicola (strain 1448A / Race 6) (Pseudomonas syringae pv. phaseolicola (strain 1448A / Race 6)), this protein is tRNA-2-methylthio-N(6)-dimethylallyladenosine synthase.